The chain runs to 200 residues: Ependymin-related protein 1 (200 aa).

Residues Met1–Gly17 form the signal peptide. Residues Asn36, Asn124, and Asn136 are each glycosylated (N-linked (GlcNAc...) asparagine).

Belongs to the ependymin family. Component of the acid-soluble and acid-insoluble organic matrix of prismatic shell layers (at protein level). Expressed discontinuously in the anterior zone of the outer fold of the mantle where its expression correlates with shell pigmentation.

It is found in the secreted. The sequence is that of Ependymin-related protein 1 from Haliotis asinina (Donkey's ear abalone).